The following is a 117-amino-acid chain: Large ribosomal subunit protein bL20c (117 aa).

It belongs to the bacterial ribosomal protein bL20 family.

The protein localises to the plastid. Its subcellular location is the chloroplast. Binds directly to 23S ribosomal RNA and is necessary for the in vitro assembly process of the 50S ribosomal subunit. It is not involved in the protein synthesizing functions of that subunit. The chain is Large ribosomal subunit protein bL20c (rpl20) from Bigelowiella natans (Pedinomonas minutissima).